The following is a 341-amino-acid chain: General L-amino acid-binding periplasmic protein AapJ (341 aa).

Positions 1–23 are cleaved as a signal peptide; it reads MKNKLLSAAIGAAVLAVGASAAS.

It belongs to the bacterial solute-binding protein 3 family. As to quaternary structure, the complex is composed of two ATP-binding proteins (AapP), two transmembrane proteins (AapM and AapQ) and a solute-binding protein (AapJ).

It is found in the periplasm. Functionally, part of the ABC transporter complex AapJQMP involved in uptake of L-amino acids. Affects the efflux of these amino acids as well. Essential for the development of bacteroids, the differentiated legume-symbiotic forms of this bacterium, and for the effective N(2) fixation by them. This chain is General L-amino acid-binding periplasmic protein AapJ (aapJ), found in Rhizobium johnstonii (strain DSM 114642 / LMG 32736 / 3841) (Rhizobium leguminosarum bv. viciae).